Here is a 503-residue protein sequence, read N- to C-terminus: Probable inactive beta-glucosidase 33 (503 aa).

The first 30 residues, 1-30 (MATGELALVSSLFIVVVFLLLGAVAREASA), serve as a signal peptide directing secretion. Residues glutamine 50, histidine 150, and 195–196 (NQ) contribute to the a beta-D-glucoside site. Cysteine 215 and cysteine 223 form a disulfide bridge. N-linked (GlcNAc...) asparagine glycosylation is present at asparagine 222. 2 residues coordinate a beta-D-glucoside: tyrosine 339 and glutamate 399. The active-site Nucleophile is the glutamate 399. A glycan (N-linked (GlcNAc...) asparagine) is linked at asparagine 436. A beta-D-glucoside contacts are provided by residues tryptophan 446, 453 to 454 (EF), and phenylalanine 462.

The protein belongs to the glycosyl hydrolase 1 family.

The polypeptide is Probable inactive beta-glucosidase 33 (BGLU33) (Oryza sativa subsp. japonica (Rice)).